Reading from the N-terminus, the 90-residue chain is Acylphosphatase (90 aa).

The Acylphosphatase-like domain maps to 3 to 90 (RVLIKLTGKV…DIYLDFSIVR (88 aa)). Active-site residues include arginine 18 and asparagine 36.

It belongs to the acylphosphatase family.

The catalysed reaction is an acyl phosphate + H2O = a carboxylate + phosphate + H(+). This chain is Acylphosphatase (acyP), found in Shewanella oneidensis (strain ATCC 700550 / JCM 31522 / CIP 106686 / LMG 19005 / NCIMB 14063 / MR-1).